Consider the following 200-residue polypeptide: Probable nicotinate-nucleotide adenylyltransferase (200 aa).

It belongs to the NadD family.

The catalysed reaction is nicotinate beta-D-ribonucleotide + ATP + H(+) = deamido-NAD(+) + diphosphate. Its pathway is cofactor biosynthesis; NAD(+) biosynthesis; deamido-NAD(+) from nicotinate D-ribonucleotide: step 1/1. Functionally, catalyzes the reversible adenylation of nicotinate mononucleotide (NaMN) to nicotinic acid adenine dinucleotide (NaAD). The polypeptide is Probable nicotinate-nucleotide adenylyltransferase (Clostridium acetobutylicum (strain ATCC 824 / DSM 792 / JCM 1419 / IAM 19013 / LMG 5710 / NBRC 13948 / NRRL B-527 / VKM B-1787 / 2291 / W)).